The chain runs to 368 residues: Glutamate 5-kinase (368 aa).

Lys-13 lines the ATP pocket. Residues Ser-54, Asp-141, and Asn-153 each coordinate substrate. 173–174 contributes to the ATP binding site; that stretch reads SD. One can recognise a PUA domain in the interval 278–355; the sequence is RGVITVDEGA…DEIEAILGYA (78 aa).

The protein belongs to the glutamate 5-kinase family.

Its subcellular location is the cytoplasm. It catalyses the reaction L-glutamate + ATP = L-glutamyl 5-phosphate + ADP. Its pathway is amino-acid biosynthesis; L-proline biosynthesis; L-glutamate 5-semialdehyde from L-glutamate: step 1/2. In terms of biological role, catalyzes the transfer of a phosphate group to glutamate to form L-glutamate 5-phosphate. In Ruegeria sp. (strain TM1040) (Silicibacter sp.), this protein is Glutamate 5-kinase.